A 113-amino-acid chain; its full sequence is Mitochondrial import inner membrane translocase subunit tim16 (113 aa).

The tract at residues 56-108 (KILGLENVETVSKEDIDKKYNELLTINDPKDGGSEYLQIKISGAKHCLHSALK) is J-like.

The protein belongs to the TIM16/PAM16 family. As to quaternary structure, probable component of the PAM complex at least composed of a mitochondrial HSP70 protein, grepE, tim16 and tim14. Associates with the TIM23 complex.

It is found in the mitochondrion inner membrane. Its function is as follows. Regulates ATP-dependent protein translocation into the mitochondrial matrix. In Dictyostelium discoideum (Social amoeba), this protein is Mitochondrial import inner membrane translocase subunit tim16 (timm16).